Consider the following 1076-residue polypeptide: DNA-directed RNA polymerase subunit beta (1076 aa).

The protein belongs to the RNA polymerase beta chain family. In plastids the minimal PEP RNA polymerase catalytic core is composed of four subunits: alpha, beta, beta', and beta''. When a (nuclear-encoded) sigma factor is associated with the core the holoenzyme is formed, which can initiate transcription.

It is found in the plastid. Its subcellular location is the chloroplast. The catalysed reaction is RNA(n) + a ribonucleoside 5'-triphosphate = RNA(n+1) + diphosphate. Its function is as follows. DNA-dependent RNA polymerase catalyzes the transcription of DNA into RNA using the four ribonucleoside triphosphates as substrates. The polypeptide is DNA-directed RNA polymerase subunit beta (Triticum aestivum (Wheat)).